The primary structure comprises 394 residues: Protein arginine N-methyltransferase 8 (394 aa).

G2 carries the N-myristoyl glycine lipid modification. The interval 21–40 is disordered; sequence VESTEVSSAPPQPPQPVIPA. 2 consecutive short sequence motifs (SH3-binding) follow at residues 29–42 and 53–58; these read APPQ…PAKP and PSCPGR. Over residues 30-39 the composition is skewed to pro residues; that stretch reads PPQPPQPVIP. An Omega-N-methylarginine; by PRMT8 modification is found at R58. R73 is subject to Asymmetric dimethylarginine; by PRMT8. The SAM-dependent MTase PRMT-type domain maps to 73–394; sequence RDYYFDSYAH…TSVSNDYKMR (322 aa). S-adenosyl-L-methionine is bound by residues H86, R95, G119, 119–122, E141, and E170; that span reads GSGT. Active-site residues include E185 and E194.

The protein belongs to the class I-like SAM-binding methyltransferase superfamily. Protein arginine N-methyltransferase family. PRMT8 subfamily. Homodimer. Tetramer; individual homodimers associates to form a homotetramer. Homooctamer; individual homodimers associates to form a homooctamer and homooligomerization is required for proper localization to the cell membrane. Heterodimer with PRMT1; heterodimerization may recruit PRMT1 activity to the plasma membrane. Interacts with PRMT2 (via the SH3 domain). Interacts with FYN (via the SH3 domain). Interacts with EWS; independently of EWS methylation status. As to expression, brain-specific. Only expressed in neurons, especially in the somatosensory and limbic systems, and a part of motor system. Highly expressed in all of the regions related to general somatosensory system. Expressed in most of the relay nuclei intervening the special somatosensory system, such as the auditory, visual and vestibular systems. Also present in forebrain limbic areas and thalamic nuclei relevant to limbic areas and in areas related to the motor system, such as the caudate putamen, Purkinje cells, inferior olivary nucleus and cerebellar nuclei.

It localises to the cell membrane. The enzyme catalyses L-arginyl-[protein] + S-adenosyl-L-methionine = N(omega)-methyl-L-arginyl-[protein] + S-adenosyl-L-homocysteine + H(+). The catalysed reaction is L-arginyl-[protein] + 2 S-adenosyl-L-methionine = N(omega),N(omega)-dimethyl-L-arginyl-[protein] + 2 S-adenosyl-L-homocysteine + 2 H(+). S-adenosyl-L-methionine-dependent and membrane-associated arginine methyltransferase that can both catalyze the formation of omega-N monomethylarginine (MMA) and asymmetrical dimethylarginine (aDMA) in proteins such as NIFK, myelin basic protein, histone H4, H2A and H2A/H2B dimer. Able to mono- and dimethylate EWS protein; however its precise role toward EWS remains unclear as it still interacts with fully methylated EWS. In Mus musculus (Mouse), this protein is Protein arginine N-methyltransferase 8.